A 269-amino-acid polypeptide reads, in one-letter code: MSSVPKRAKLDGAPADGNTSAAAGNNEEESEALEQIDACQNEIDALNEKASEEILKVEQKYNKLRKPCYEKRSELVKRIPNFWVTSFINHPQVSGILDEEEEECLHALNKLEVEEFEDIKSGYRINFHFDENPYFENKVLTKEFHLNSAAASENGDWPASTSTPIKWKEGKNLLKLLLTKPYGNKKKRNSEYKTFFDWFSDNTDPVNDEIAELIKDDLWPNPLQYYLVPDIEVEPEDEEDNEDNDEEAFDDEDGEDGEGEEEEEDEDDK.

The segment at 1 to 33 is disordered; sequence MSSVPKRAKLDGAPADGNTSAAAGNNEEESEAL. Residues Ser-30, Ser-148, and Ser-152 each carry the phosphoserine modification. Residues 227–269 form a disordered region; sequence LVPDIEVEPEDEEDNEDNDEEAFDDEDGEDGEGEEEEEDEDDK. Residues 231–269 are compositionally biased toward acidic residues; the sequence is IEVEPEDEEDNEDNDEEAFDDEDGEDGEGEEEEEDEDDK.

Belongs to the nucleosome assembly protein (NAP) family. As to quaternary structure, interacts specifically with B-type cyclins.

The protein is Protein SET (Set) of Drosophila melanogaster (Fruit fly).